The chain runs to 131 residues: Small nuclear ribonucleoprotein SmD3b (131 aa).

The Sm domain maps to 7–79; sequence IPVKLLHEAS…VRFMVIPDIL (73 aa). Residues 96 to 131 are disordered; that stretch reads SSSLGVGRGRGAMRGKPAAGPGRGTGGRGAVPPVRR.

This sequence belongs to the snRNP core protein family. Expressed in young seedlings, roots, leaves, flowers and immature siliques.

Its subcellular location is the cytoplasm. It is found in the cytosol. It localises to the nucleus. Its function is as follows. Core component of the spliceosomal U1, U2, U4 and U5 small nuclear ribonucleoproteins (snRNPs), the building blocks of the spliceosome. May play a major role in the splicing of cellular pre-mRNAs. Required for normal plant development. The protein is Small nuclear ribonucleoprotein SmD3b of Arabidopsis thaliana (Mouse-ear cress).